The primary structure comprises 962 residues: Integrator complex subunit 7 (962 aa).

A phosphoserine mark is found at Ser-338 and Ser-809.

The protein belongs to the Integrator subunit 7 family. Component of the Integrator complex, composed of core subunits INTS1, INTS2, INTS3, INTS4, INTS5, INTS6, INTS7, INTS8, INTS9/RC74, INTS10, INTS11/CPSF3L, INTS12, INTS13, INTS14 and INTS15. The core complex associates with protein phosphatase 2A subunits PPP2CA and PPP2R1A, to form the Integrator-PP2A (INTAC) complex. Interacts with NABP2.

It is found in the nucleus. Its subcellular location is the chromosome. It localises to the cytoplasm. Functionally, component of the integrator complex, a multiprotein complex that terminates RNA polymerase II (Pol II) transcription in the promoter-proximal region of genes. The integrator complex provides a quality checkpoint during transcription elongation by driving premature transcription termination of transcripts that are unfavorably configured for transcriptional elongation: the complex terminates transcription by (1) catalyzing dephosphorylation of the C-terminal domain (CTD) of Pol II subunit POLR2A/RPB1 and SUPT5H/SPT5, (2) degrading the exiting nascent RNA transcript via endonuclease activity and (3) promoting the release of Pol II from bound DNA. The integrator complex is also involved in terminating the synthesis of non-coding Pol II transcripts, such as enhancer RNAs (eRNAs), small nuclear RNAs (snRNAs), telomerase RNAs and long non-coding RNAs (lncRNAs). May be not involved in the recruitment of cytoplasmic dynein to the nuclear envelope by different components of the INT complex. Plays a role in DNA damage response (DDR) signaling during the S phase. In Homo sapiens (Human), this protein is Integrator complex subunit 7.